Consider the following 333-residue polypeptide: Probable G-protein coupled receptor 33 (333 aa).

At 1-30 the chain is on the extracellular side; sequence MDLINSTDYLINASTLVRNSTQFLAPASKM. Residues N5, N12, and N19 are each glycosylated (N-linked (GlcNAc...) asparagine). Residues 31 to 53 traverse the membrane as a helical segment; it reads IIALSLYISSIIGTITNGLYLWV. The Cytoplasmic segment spans residues 54–64; that stretch reads LRFKMKQTVNT. Residues 65–86 traverse the membrane as a helical segment; it reads LLFFHLILSYFISTMILPFMAT. Residues 87–103 are Extracellular-facing; sequence SQLQDNHWNFGTALCKV. The cysteines at positions 101 and 179 are disulfide-linked. A helical transmembrane segment spans residues 104 to 124; that stretch reads FNGTLSLGMFTSVFFLSAIGL. Topologically, residues 125 to 143 are cytoplasmic; the sequence is DRYLLTLHPVWSQQHRTPR. A helical membrane pass occupies residues 144-165; sequence WASSIVLGVWISAAALSIPYLI. Residues 166 to 209 are Extracellular-facing; sequence FRETHHDRKGKVTCQNNYAVSTNWESKEMQASRQWIHVACFISR. A helical transmembrane segment spans residues 210–230; sequence FLLGFLLPFFIIIFCYERVAS. Topologically, residues 231–246 are cytoplasmic; sequence KVKERSLFKSSKPFKV. Residues 247 to 268 form a helical membrane-spanning segment; that stretch reads MMTAIISFFVCWMPYHIHQGLL. Over 269–283 the chain is Extracellular; the sequence is LTTNQSLLLELTLIL. An N-linked (GlcNAc...) asparagine glycan is attached at N272. A helical transmembrane segment spans residues 284–303; it reads TVLTTSFNTIFSPTLYLFVG. Residues 304–333 are Cytoplasmic-facing; that stretch reads ENFKKVFKKSILALFESTFSEDSSVERTQT.

It belongs to the G-protein coupled receptor 1 family. As to expression, expressed in spleen, lung, heart, liver, kidney, pancreas, thymus, gonads and leukocytes.

It localises to the cell membrane. In terms of biological role, orphan receptor; could be a chemoattractant receptor. The polypeptide is Probable G-protein coupled receptor 33 (GPR33) (Homo sapiens (Human)).